We begin with the raw amino-acid sequence, 155 residues long: SsrA-binding protein (155 aa).

The protein belongs to the SmpB family.

The protein resides in the cytoplasm. Functionally, required for rescue of stalled ribosomes mediated by trans-translation. Binds to transfer-messenger RNA (tmRNA), required for stable association of tmRNA with ribosomes. tmRNA and SmpB together mimic tRNA shape, replacing the anticodon stem-loop with SmpB. tmRNA is encoded by the ssrA gene; the 2 termini fold to resemble tRNA(Ala) and it encodes a 'tag peptide', a short internal open reading frame. During trans-translation Ala-aminoacylated tmRNA acts like a tRNA, entering the A-site of stalled ribosomes, displacing the stalled mRNA. The ribosome then switches to translate the ORF on the tmRNA; the nascent peptide is terminated with the 'tag peptide' encoded by the tmRNA and targeted for degradation. The ribosome is freed to recommence translation, which seems to be the essential function of trans-translation. This Bacillus cytotoxicus (strain DSM 22905 / CIP 110041 / 391-98 / NVH 391-98) protein is SsrA-binding protein.